The primary structure comprises 609 residues: Membrane protein insertase YidC (609 aa).

A helical membrane pass occupies residues 9-29 (IIAIVLSGLILIAWQYFYNIP). Residues 35-63 (RAAQQAQSQTAKSPTEPTPNSPKPDHPAA) are disordered. 4 helical membrane passes run 375-395 (VFGN…AIFF), 449-469 (LPMV…FVTI), 507-527 (LLGP…TMWF), and 546-566 (WMPV…VIYW).

It belongs to the OXA1/ALB3/YidC family. Type 1 subfamily. As to quaternary structure, interacts with the Sec translocase complex via SecD. Specifically interacts with transmembrane segments of nascent integral membrane proteins during membrane integration.

The protein localises to the cell inner membrane. Its function is as follows. Required for the insertion and/or proper folding and/or complex formation of integral membrane proteins into the membrane. Involved in integration of membrane proteins that insert both dependently and independently of the Sec translocase complex, as well as at least some lipoproteins. Aids folding of multispanning membrane proteins. The sequence is that of Membrane protein insertase YidC from Nitrobacter hamburgensis (strain DSM 10229 / NCIMB 13809 / X14).